A 567-amino-acid chain; its full sequence is DNA-binding protein REPIN1 (567 aa).

The segment at 17–52 (PRLLSGPSQESPQTLGKESRGLRQQGTSVAQSGAQA) is disordered. Positions 22–50 (GPSQESPQTLGKESRGLRQQGTSVAQSGA) are enriched in polar residues. Ser-27 carries the post-translational modification Phosphoserine. Residue Thr-30 is modified to Phosphothreonine. N6-acetyllysine is present on Lys-33. The C2H2-type 1; atypical zinc finger occupies 57–79 (HRCAHCRRHFPGWVALWLHTRRC). 7 consecutive C2H2-type zinc fingers follow at residues 85–107 (LPCPECGRRFRHAPFLALHRQVH), 116–138 (FACHLCGQSFRGWVALVLHLRAH), 145–168 (IACPKCERRFWRRKQLRAHLRRCH), 177–199 (FICGNCGRSFAQWDQLVAHKRVH), 236–258 (FQCACCGKRFRHKPNLIAHRRVH), 264–286 (HQCPECGKRFTNKPYLTSHRRIH), and 292–314 (YPCKECGRRFRHKPNLLSHSKIH). Residue Lys-276 is modified to N6-acetyllysine. Positions 305-315 (PNLLSHSKIHK) are enriched in basic residues. The tract at residues 305–372 (PNLLSHSKIH…HPQDPIEAPP (68 aa)) is disordered. Over residues 345–362 (PAVPLKPAQEPPPGAPPE) the composition is skewed to pro residues. 7 consecutive C2H2-type zinc fingers follow at residues 375 to 397 (YSCDDCGRSFRLERFLRAHQRQH), 403 to 425 (FTCAECGKNFGKKTHLVAHSRVH), 431 to 453 (FACEECGRRFSQGSHLAAHRRDH), 459 to 481 (FVCPDCGKAFRHKPYLAAHRRIH), 487 to 509 (YVCPDCGKAFSQKSNLVSHRRIH), 515 to 537 (YACPDCDRSFSQKSNLITHRKSH), and 543 to 565 (FCCAICGQTFDDEERLLAHQKKH).

As to quaternary structure, homodimers and homomultimers. Found in a complex with RIP60 and RIP100. In terms of tissue distribution, expressed in adipose tissue and bone tissue.

The protein localises to the nucleus. It localises to the cytoplasm. The protein resides in the cytosol. Functionally, sequence-specific double-stranded DNA-binding protein. Binds ATT-rich and T-rich DNA sequences and facilitates DNA bending. May regulate the expression of genes involved in cellular fatty acid import, including SCARB1/CD36, and genes involved in lipid droplet formation. May regulate the expression of LCN2, and thereby influence iron metabolism and apoptosis-related pathways. May regulate the expression of genes involved in glucose transport. This is DNA-binding protein REPIN1 (REPIN1) from Homo sapiens (Human).